A 213-amino-acid polypeptide reads, in one-letter code: Putative manganese efflux pump MntP (213 aa).

The next 7 helical transmembrane spans lie at 6 to 26, 34 to 54, 58 to 78, 107 to 127, 132 to 152, 153 to 173, and 192 to 212; these read LGVL…GIGM, AFML…FGIL, ALGL…LFFL, GSGG…LFAP, LVVI…SLGT, VGAQ…IMTV, and LAGG…SASP.

Belongs to the MntP (TC 9.B.29) family.

It is found in the cell membrane. Probably functions as a manganese efflux pump. This Heliobacterium modesticaldum (strain ATCC 51547 / Ice1) protein is Putative manganese efflux pump MntP.